The chain runs to 704 residues: Non-sulfated chondroitin lyase E66 (704 aa).

The first 23 residues, 1 to 23, serve as a signal peptide directing secretion; the sequence is MSIVLIIVIVVIFLICFLYLSNS. Residues N236 and H291 each act as proton acceptor in the active site. Y299 functions as the Proton donor in the catalytic mechanism.

Belongs to the baculoviridae E66 family.

It is found in the virion membrane. The protein localises to the host nucleus. Its subcellular location is the host cytoplasm. Functionally, component of the polyhedra envelope. Plays an essential role in oral infectivity. May digest, with its chondroitin lyase activity, the chondroitin sulfate barrier of the peritrophic matrix of the host midgut to facilitate viral infection in the epithelial cells. The polypeptide is Non-sulfated chondroitin lyase E66 (P79) (Lepidoptera (butterflies and moths)).